The primary structure comprises 196 residues: MINKIYGKIIEKRESSIVIVALPFEFEVLVSSFCNAELRLLEDVEILTYLHLREDEIKLFGFLNVSEREVFEELISVDGIGPRAALRMLSGMKYDEFRDAIEREDVKRISTVKGIGNKVAGKIFLKLRGKLVKADELTSSVFKFKDLEQSIVNMGFDRKLVVAAIKEIMLIDEFLMLREVEQEQFLFRETLKRLSG.

Residues 1-63 form a domain I region; the sequence is MINKIYGKII…EDEIKLFGFL (63 aa). A domain II region spans residues 64 to 138; the sequence is NVSEREVFEE…GKLVKADELT (75 aa). Residue T138 is a region of interest, flexible linker. Positions 139–196 are domain III; the sequence is SSVFKFKDLEQSIVNMGFDRKLVVAAIKEIMLIDEFLMLREVEQEQFLFRETLKRLSG.

It belongs to the RuvA family. Homotetramer. Forms an RuvA(8)-RuvB(12)-Holliday junction (HJ) complex. HJ DNA is sandwiched between 2 RuvA tetramers; dsDNA enters through RuvA and exits via RuvB. An RuvB hexamer assembles on each DNA strand where it exits the tetramer. Each RuvB hexamer is contacted by two RuvA subunits (via domain III) on 2 adjacent RuvB subunits; this complex drives branch migration. In the full resolvosome a probable DNA-RuvA(4)-RuvB(12)-RuvC(2) complex forms which resolves the HJ.

The protein resides in the cytoplasm. The RuvA-RuvB-RuvC complex processes Holliday junction (HJ) DNA during genetic recombination and DNA repair, while the RuvA-RuvB complex plays an important role in the rescue of blocked DNA replication forks via replication fork reversal (RFR). RuvA specifically binds to HJ cruciform DNA, conferring on it an open structure. The RuvB hexamer acts as an ATP-dependent pump, pulling dsDNA into and through the RuvAB complex. HJ branch migration allows RuvC to scan DNA until it finds its consensus sequence, where it cleaves and resolves the cruciform DNA. The chain is Holliday junction branch migration complex subunit RuvA from Borrelia hermsii (strain HS1 / DAH).